Here is a 372-residue protein sequence, read N- to C-terminus: 4-hydroxybenzoate polyprenyltransferase, mitochondrial (372 aa).

A mitochondrion-targeting transit peptide spans 1–42; sequence MFIWQRKSILLGRSILGSGRVTVAGIIGSSRKRYTSSSSSSS. Transmembrane regions (helical) follow at residues 92–112, 114–134, 171–191, 193–213, 229–249, 298–318, and 352–372; these read PVGT…GAMM, GATL…ALVM, ALVF…LLPA, CWWL…FKRF, ALLG…PLYL, IALL…GFIG, and TGLY…FGFL.

It belongs to the UbiA prenyltransferase family. Requires Mg(2+) as cofactor.

It localises to the mitochondrion inner membrane. The catalysed reaction is an all-trans-polyprenyl diphosphate + 4-hydroxybenzoate = a 4-hydroxy-3-(all-trans-polyprenyl)benzoate + diphosphate. The protein operates within cofactor biosynthesis; ubiquinone biosynthesis. In terms of biological role, catalyzes the prenylation of para-hydroxybenzoate (PHB) with an all-trans polyprenyl group. Mediates the second step in the final reaction sequence of coenzyme Q (CoQ) biosynthesis, which is the condensation of the polyisoprenoid side chain with PHB, generating the first membrane-bound Q intermediate. The sequence is that of 4-hydroxybenzoate polyprenyltransferase, mitochondrial from Saccharomyces cerevisiae (strain ATCC 204508 / S288c) (Baker's yeast).